A 310-amino-acid polypeptide reads, in one-letter code: Ribonuclease Z (310 aa).

Zn(2+) is bound by residues histidine 61, histidine 63, aspartate 65, histidine 66, and histidine 139. The active-site Proton acceptor is aspartate 65. Residues 150 to 175 are disordered; it reads EDDRPGRFDRPKAEELGVPVGPKFGR. Residues 153–164 show a composition bias toward basic and acidic residues; the sequence is RPGRFDRPKAEE. Zn(2+) is bound by residues aspartate 210 and histidine 268.

It belongs to the RNase Z family. In terms of assembly, homodimer. Zn(2+) is required as a cofactor.

It carries out the reaction Endonucleolytic cleavage of RNA, removing extra 3' nucleotides from tRNA precursor, generating 3' termini of tRNAs. A 3'-hydroxy group is left at the tRNA terminus and a 5'-phosphoryl group is left at the trailer molecule.. Zinc phosphodiesterase, which displays some tRNA 3'-processing endonuclease activity. Probably involved in tRNA maturation, by removing a 3'-trailer from precursor tRNA. This is Ribonuclease Z from Halorubrum lacusprofundi (strain ATCC 49239 / DSM 5036 / JCM 8891 / ACAM 34).